The primary structure comprises 501 residues: MKKRALISVFNKDGVLDFAKFLVSKDIEIVSTGGTYKYLKENGIDVIEINEVTNFPEMLDGRVKTLHPLVHAGILAIRDNKEHMKVLEEREIHTIDYVVVNLYPFFEKVKEDLTFEEKVEFIDIGGPTMLRAAAKNFQDVVVISNINDYEVVKSEIKNDGQVSLKTKKKLSGKVFNLMSAYDGAIANFMLGDEEEYPEYLSVSYKKMQNLRYGENSHQSAAVYSSTMVDGAMNTFETLNGKELSYNNFKDVDIAWKCANEFDEPACCALKHNTPCGVATGENSYEAYMKAYEVDPTSIFGGIIGFNRKVDKKTAQEMVKIFLEVIAAPDYDEDALEVLKTKKNLRVLKFHNTPKAEKCMVTVDGAILVQDEDNKLIDEIKVVTEKKPSDEEMKDLLFGMKVVKYVKSNAIVVAHNGIALGIGGGQVNRIWPTEDALRRGKGATILASDAFFPFRDVVDKAAEGGIKAIIQPGGSMRDQESIDACNEHGIAMVFTGFRHFKH.

The MGS-like domain occupies Met-1–Ser-144.

It belongs to the PurH family.

The catalysed reaction is (6R)-10-formyltetrahydrofolate + 5-amino-1-(5-phospho-beta-D-ribosyl)imidazole-4-carboxamide = 5-formamido-1-(5-phospho-D-ribosyl)imidazole-4-carboxamide + (6S)-5,6,7,8-tetrahydrofolate. It carries out the reaction IMP + H2O = 5-formamido-1-(5-phospho-D-ribosyl)imidazole-4-carboxamide. It functions in the pathway purine metabolism; IMP biosynthesis via de novo pathway; 5-formamido-1-(5-phospho-D-ribosyl)imidazole-4-carboxamide from 5-amino-1-(5-phospho-D-ribosyl)imidazole-4-carboxamide (10-formyl THF route): step 1/1. It participates in purine metabolism; IMP biosynthesis via de novo pathway; IMP from 5-formamido-1-(5-phospho-D-ribosyl)imidazole-4-carboxamide: step 1/1. This is Bifunctional purine biosynthesis protein PurH from Clostridium botulinum (strain Eklund 17B / Type B).